A 467-amino-acid chain; its full sequence is Methylenetetrahydrofolate--tRNA-(uracil-5-)-methyltransferase TrmFO (467 aa).

Residue 10–15 participates in FAD binding; that stretch reads GGGMAG.

Belongs to the MnmG family. TrmFO subfamily. Requires FAD as cofactor.

Its subcellular location is the cytoplasm. The catalysed reaction is uridine(54) in tRNA + (6R)-5,10-methylene-5,6,7,8-tetrahydrofolate + NADH + H(+) = 5-methyluridine(54) in tRNA + (6S)-5,6,7,8-tetrahydrofolate + NAD(+). It carries out the reaction uridine(54) in tRNA + (6R)-5,10-methylene-5,6,7,8-tetrahydrofolate + NADPH + H(+) = 5-methyluridine(54) in tRNA + (6S)-5,6,7,8-tetrahydrofolate + NADP(+). Its function is as follows. Catalyzes the folate-dependent formation of 5-methyl-uridine at position 54 (M-5-U54) in all tRNAs. This Hyphomonas neptunium (strain ATCC 15444) protein is Methylenetetrahydrofolate--tRNA-(uracil-5-)-methyltransferase TrmFO.